Consider the following 185-residue polypeptide: uncharacterized protein (185 aa).

In terms of tissue distribution, component of the acid-insoluble and acid-soluble organic matrix of calcified layers of the shell (at protein level).

It is found in the secreted. This is an uncharacterized protein from Lottia gigantea (Giant owl limpet).